A 145-amino-acid chain; its full sequence is Nucleoside diphosphate kinase (145 aa).

6 residues coordinate ATP: Lys11, Phe59, Arg87, Thr93, Arg104, and Asn114. The active-site Pros-phosphohistidine intermediate is the His117.

It belongs to the NDK family. As to quaternary structure, homotetramer. Mg(2+) is required as a cofactor.

The protein localises to the cytoplasm. It catalyses the reaction a 2'-deoxyribonucleoside 5'-diphosphate + ATP = a 2'-deoxyribonucleoside 5'-triphosphate + ADP. The enzyme catalyses a ribonucleoside 5'-diphosphate + ATP = a ribonucleoside 5'-triphosphate + ADP. In terms of biological role, major role in the synthesis of nucleoside triphosphates other than ATP. The ATP gamma phosphate is transferred to the NDP beta phosphate via a ping-pong mechanism, using a phosphorylated active-site intermediate. In Myxococcus xanthus, this protein is Nucleoside diphosphate kinase.